Here is a 124-residue protein sequence, read N- to C-terminus: Quinol oxidase subunit 4 (124 aa).

3 consecutive transmembrane segments (helical) span residues 16–36 (IVGFALSIVLTLLALWVAVYT), 44–64 (LWIIFGFAFIQAALQLLMFMH), and 78–98 (TLFGFFGAIVIVLGSIWIFAA).

Belongs to the cytochrome c oxidase bacterial subunit 4 family.

It localises to the cell membrane. It catalyses the reaction 2 a quinol + O2 = 2 a quinone + 2 H2O. Catalyzes quinol oxidation with the concomitant reduction of oxygen to water. Major component for energy conversion during vegetative growth. This is Quinol oxidase subunit 4 (qoxD) from Bacillus spizizenii (strain ATCC 23059 / NRRL B-14472 / W23) (Bacillus subtilis subsp. spizizenii).